A 401-amino-acid chain; its full sequence is 4-hydroxy-3-methylbut-2-en-1-yl diphosphate synthase (ferredoxin) (401 aa).

Cys306, Cys309, Cys340, and Glu347 together coordinate [4Fe-4S] cluster.

Belongs to the IspG family. [4Fe-4S] cluster is required as a cofactor.

The enzyme catalyses (2E)-4-hydroxy-3-methylbut-2-enyl diphosphate + 2 oxidized [2Fe-2S]-[ferredoxin] + H2O = 2-C-methyl-D-erythritol 2,4-cyclic diphosphate + 2 reduced [2Fe-2S]-[ferredoxin] + H(+). Its pathway is isoprenoid biosynthesis; isopentenyl diphosphate biosynthesis via DXP pathway; isopentenyl diphosphate from 1-deoxy-D-xylulose 5-phosphate: step 5/6. Converts 2C-methyl-D-erythritol 2,4-cyclodiphosphate (ME-2,4cPP) into 1-hydroxy-2-methyl-2-(E)-butenyl 4-diphosphate. The sequence is that of 4-hydroxy-3-methylbut-2-en-1-yl diphosphate synthase (ferredoxin) from Synechococcus sp. (strain CC9902).